Reading from the N-terminus, the 292-residue chain is Protease HtpX (292 aa).

2 consecutive transmembrane segments (helical) span residues 5 to 25 and 34 to 54; these read IFLF…VMSV and SGLL…SLLL. H140 serves as a coordination point for Zn(2+). The active site involves E141. Residue H144 coordinates Zn(2+). A run of 2 helical transmembrane segments spans residues 155–175 and 193–213; these read LLQG…GGII and IIVF…AMWF. Position 218 (E218) interacts with Zn(2+).

It belongs to the peptidase M48B family. The cofactor is Zn(2+).

The protein resides in the cell inner membrane. The chain is Protease HtpX from Xanthomonas oryzae pv. oryzae (strain PXO99A).